A 195-amino-acid polypeptide reads, in one-letter code: Probable GTP-binding protein EngB (195 aa).

Residues 22-194 (LKGEVAFVGR…LDLISTLLKE (173 aa)) form the EngB-type G domain. Residues 30–37 (GRSNVGKS), 56–60 (GKTRS), 74–77 (DLPG), 141–144 (TKMD), and 173–175 (TSS) each bind GTP. The Mg(2+) site is built by Ser37 and Thr58.

This sequence belongs to the TRAFAC class TrmE-Era-EngA-EngB-Septin-like GTPase superfamily. EngB GTPase family. The cofactor is Mg(2+).

In terms of biological role, necessary for normal cell division and for the maintenance of normal septation. The protein is Probable GTP-binding protein EngB of Thermotoga sp. (strain RQ2).